Here is a 1568-residue protein sequence, read N- to C-terminus: MSFEVGTRCWYPHKELGWIGAEVIKNEVKDGKYHLELSLEDDEVVSVDTEDLNDDKNQSLPLLRNPPILEATEDLTSLSYLNEPAVLHAIKQRYSQLNIYTYSGIVLIATNPFDRVDQLYTQDMIQAYAGKRRGELEPHLFAIAEEAYRLMKNDKQNQTIVVSGESGAGKTVSAKYIMRYFASVEEENSTTIQHQVEMSETEQRILATNPIMEAFGNAKTTRNDNSSRFGKYLEILFDKETSIIGARIRTYLLERSRLVYQPPIERNYHIFYQLMAGLPAQTKEELHLTDASDYFYMNQGGDTKIAGIDDAEEYQTTVDALTLVGITTATQHQIFKILAALLHIGNIEIKKTRNDASLSADEPSLKLACELLGIDSYNFAKWITKKQIVTRSEKIVSNLNFNQAMVAKDSVAKFIYSALFDWLVENINTVLCNPDVDDQINSFIGVLDIYGFEHFEKNSFEQFCINYANEKLQQEFNQHVFKLEQEEYVAEEIEWSFIEFNDNQPCIDLIENKLGILSLLDEESRLPAGSDESWTQKLYQTLDKSPTNEVFSKPRFGQTKFIVSHYALDVAYDVEGFIEKNRDTVSDGHLEVLKASTNETLINILEGLENAAKKLEETKKAELEQNNPGNKKPGPARTVNRKPTLGSMFKQSLIELMSTINSTNVHYIRCIKPNADKEAWQFDNLMVLSQLRACGVLETIRISCAGFPSRWTFEEFVLRYYILIPHEEWDLIFQKKETTEDDIISVVKMILDATVKDKTKYQIGNTKIFFKAGMLAYLEKLRSNKMHNSIVTIQKKIRAKYYRNQYLKISQAIKIWQSNTRGFIIRHRVYHEMKVHSATLIQATYRGYAIRKNVFNVLITIINLQTRIREELKRKQLKREHEYNAAVTIQSKVRTFEPRSTFLNTKRDTVVVQSLIRRRAAQGRLRQLKSDAKSVHHLKEVSYKLENKVIELTQNLASKVKENKEMTERIKELQVQVEESAKLQETLENMKKEHLVNIDNQKNKDMELQKTIEDNLQSTEQNLKNAQLELEEMVKQHNELKEESRKQLDELDETKKALVEHQTLNGDLQNEVKSLKEEISRLQTAMSLGTVTTSVLPQTPLKDVMGGSTANYNSLMLDNAELSPGKSRTTPMSGNHIDSLNIDQDNGANATQINEELYRLLEDTEILNQEITEGLLKGFEVPDAGVAIQLSKRDVVYPARILIIVLSEMWRFGLTKQSESFLAQVLTTIQKVVTQLKGNDLIPSGVFWLANVRELYSFVVFALNSILTEETFKNGMTDEEYKEYVSLVTELKDDFEALSYNIYNIWLKKLQKQLQKKAINAVVISESLPGFSAGETSGFLNKIFANTEEYTMDDILTFFNSIYWCMKSFHIETEVFHAVVTTLLNYVDAICFNELIMKRNFLSWKRGLQLNYNVTRLEEWCKTHGLTGGTECLQHLIQTAKLLQVRKYTIEDIDILRGICYSLTPAQLQKLISQYQVADYESPIPQEILRYVADIVKKEAALSNDSKGHEHSSGIFITPETGPFTDPFSLIKTRKFDQVEAYIPAWLSLPATKRIVDLVAQQVVQDGH.

The region spanning 4 to 57 (EVGTRCWYPHKELGWIGAEVIKNEVKDGKYHLELSLEDDEVVSVDTEDLNDDKN) is the Myosin N-terminal SH3-like domain. The region spanning 70 to 783 (EATEDLTSLS…MLAYLEKLRS (714 aa)) is the Myosin motor domain. An ATP-binding site is contributed by 164–171 (GESGAGKT). Residues 443–523 (FIGVLDIYGF…LGILSLLDEE (81 aa)) form an actin-binding region. The segment at 619-641 (KKAELEQNNPGNKKPGPARTVNR) is disordered. 6 IQ domains span residues 786–808 (MHNS…QYLK), 809–833 (ISQA…YHEM), 834–856 (KVHS…NVFN), 857–881 (VLIT…KREH), 882–904 (EYNA…TFLN), and 905–934 (TKRD…DAKS). Residues 944 to 1088 (KLENKVIELT…ISRLQTAMSL (145 aa)) adopt a coiled-coil conformation. The tract at residues 1089–1568 (GTVTTSVLPQ…VAQQVVQDGH (480 aa)) is non alpha-helical, tail domain. The region spanning 1223 to 1498 (AQVLTTIQKV…LRYVADIVKK (276 aa)) is the Dilute domain.

This sequence belongs to the TRAFAC class myosin-kinesin ATPase superfamily. Myosin family. In terms of assembly, homodimer. Interacts with calmodulin (CMD1) and the myosin light chain MLC1 through its IQ repeats.

Its function is as follows. Myosin heavy chain that is required for the cell cycle-regulated transport of various organelles and proteins for their segregation. Functions by binding with its tail domain to receptor proteins on organelles and exerting force with its N-terminal motor domain against actin filaments, thereby transporting its cargo along polarized actin cables. The chain is Myosin-2 (MYO2) from Saccharomyces uvarum (strain ATCC 76518 / CBS 7001 / CLIB 283 / NBRC 10550 / MCYC 623 / NCYC 2669 / NRRL Y-11845) (Yeast).